We begin with the raw amino-acid sequence, 464 residues long: Protein ABHD18 (464 aa).

The signal sequence occupies residues 1 to 24 (MGVSKLDILYRRLLLTKLFIRGWG). An N-linked (GlcNAc...) asparagine glycan is attached at Asn-341.

This sequence belongs to the AB hydrolase superfamily.

It localises to the secreted. This Mus musculus (Mouse) protein is Protein ABHD18.